Consider the following 816-residue polypeptide: Leucine--tRNA ligase (816 aa).

The short motif at 40–51 (SYPSGSQLHAGH) is the 'HIGH' region element. Positions 576–580 (KMSKS) match the 'KMSKS' region motif. An ATP-binding site is contributed by Lys-579.

Belongs to the class-I aminoacyl-tRNA synthetase family.

Its subcellular location is the cytoplasm. It catalyses the reaction tRNA(Leu) + L-leucine + ATP = L-leucyl-tRNA(Leu) + AMP + diphosphate. The protein is Leucine--tRNA ligase of Clostridium perfringens (strain 13 / Type A).